We begin with the raw amino-acid sequence, 153 residues long: D-amino acid oxidase regulator (153 aa).

Positions 1–25 are involved in targeting to the mitochondrion; the sequence is MLEKLMGADSLQLFRSRYTLGKIYF. The interval 138–153 is interaction with DAO; that stretch reads KDQSCNHKEITSTKAE.

As to quaternary structure, interacts with DAO (D-amino acid oxidase); the interaction is direct, can occur in the presence or absence of FAD or substrate bound to DAO, and results in a complex containing two DAO homodimers and two DAOA monomers. Interacts with DDO (D-aspartate oxidase); the interaction is direct. Interacts wih SOD1; the interaction is direct. Interacts with MSRB2; the interaction is direct. Expressed in the amygdala and in astrocytes of the cortex (at protein level). Expressed in the caudate nucleus, spinal cord and testis.

The protein localises to the cytoplasm. Its subcellular location is the cytosol. The protein resides in the golgi apparatus. It localises to the mitochondrion. Functionally, may suppress DAO (D-amino acid oxidase) and SOD1 activity and promote their degradation. Has conversely also been suggested to function as a DAO activator. May stimulate the degradation of DDO (D-aspartate oxidase). May play a role in mitochondrial fission. This Homo sapiens (Human) protein is D-amino acid oxidase regulator (DAOA).